The following is a 319-amino-acid chain: Ferrochelatase (319 aa).

The Fe cation site is built by histidine 194 and glutamate 275.

The protein belongs to the ferrochelatase family.

The protein localises to the cytoplasm. The catalysed reaction is heme b + 2 H(+) = protoporphyrin IX + Fe(2+). The protein operates within porphyrin-containing compound metabolism; protoheme biosynthesis; protoheme from protoporphyrin-IX: step 1/1. Catalyzes the ferrous insertion into protoporphyrin IX. The polypeptide is Ferrochelatase (Vibrio vulnificus (strain CMCP6)).